A 641-amino-acid polypeptide reads, in one-letter code: Bifunctional protein glk (641 aa).

Positions 1–340 (MSTGAQTKAA…QLSNRTGGAS (340 aa)) are glucokinase. 23–28 (ADVGGT) contributes to the ATP binding site. The region spanning 341–417 (SAVFERIRQM…LKLATGLTGT (77 aa)) is the HTH rpiR-type domain. The tract at residues 341–641 (SAVFERIRQM…SHGAAPAAKD (301 aa)) is putative HTH-type transcriptional regulator. A DNA-binding region (H-T-H motif) is located at residues 377-396 (IVDIARKADVSQPTVIRFCR). An SIS domain is found at 461–600 (AIDILNNARR…AVGVAIRRAA (140 aa)). The helical transmembrane segment at 576–596 (SMISRILHLVMIDILAVGVAI) threads the bilayer.

In the N-terminal section; belongs to the bacterial glucokinase family.

The protein localises to the membrane. It catalyses the reaction D-glucose + ATP = D-glucose 6-phosphate + ADP + H(+). The sequence is that of Bifunctional protein glk (glk) from Burkholderia pseudomallei (strain 1710b).